We begin with the raw amino-acid sequence, 252 residues long: Hydroxyacylglutathione hydrolase (252 aa).

7 residues coordinate Zn(2+): His-54, His-56, Asp-58, His-59, His-111, Asp-128, and His-166.

The protein belongs to the metallo-beta-lactamase superfamily. Glyoxalase II family. As to quaternary structure, monomer. The cofactor is Zn(2+).

The enzyme catalyses an S-(2-hydroxyacyl)glutathione + H2O = a 2-hydroxy carboxylate + glutathione + H(+). It functions in the pathway secondary metabolite metabolism; methylglyoxal degradation; (R)-lactate from methylglyoxal: step 2/2. Thiolesterase that catalyzes the hydrolysis of S-D-lactoyl-glutathione to form glutathione and D-lactic acid. The sequence is that of Hydroxyacylglutathione hydrolase from Aliivibrio fischeri (strain MJ11) (Vibrio fischeri).